A 365-amino-acid chain; its full sequence is Alanine racemase (365 aa).

Lys-32 serves as the catalytic Proton acceptor; specific for D-alanine. Lys-32 carries the post-translational modification N6-(pyridoxal phosphate)lysine. Arg-128 contacts substrate. The active-site Proton acceptor; specific for L-alanine is the Tyr-257. Met-305 provides a ligand contact to substrate.

It belongs to the alanine racemase family. The cofactor is pyridoxal 5'-phosphate.

It carries out the reaction L-alanine = D-alanine. Its pathway is amino-acid biosynthesis; D-alanine biosynthesis; D-alanine from L-alanine: step 1/1. Functionally, catalyzes the interconversion of L-alanine and D-alanine. May also act on other amino acids. This Francisella tularensis subsp. novicida (strain U112) protein is Alanine racemase (alr).